A 511-amino-acid polypeptide reads, in one-letter code: MEEFKRYLELDKSKSQQHDFLYPLLFQEYIYGLAHHNQSLTRSSSLELEKTGFDNNFSLLIVKRLITQMGRQNHLSFFTNDSNQNPFLGHNTTLYSKILLDGFVVVLEIPFSIRVISSLECKEIVKSHNLRSIHSIFPFLEDKFTHLNYVLDFLIPHFIHLEILVQTLRYWVKDASSLHLLRALIHKYHNWNNIITLKKSSFSFSKRNKRFLFFLYNFHVYEYESIFTFLRNQSSHLKSNSYRPFLDRIYFYEKRDHFLEIFTNYFQAILCSFKDPFMHYVRYQGKALLASKGVFLLINKWNSYLVNFWQCYFYTWSQPGRIQINKLSNHSLDLLGYLSSVRLTSSMVRNQMLENVFLIANASKKLNTIVPIIPLIGSLSKAKFCNPLGHPISKPVWADLSDSDIIDRFGRIYRNISHYYSGSSKKMSLYRIKYIIRLSCARTLARKHKSTVRAFLKRTGSELLEEFFMEEERIFSLTFPKISSTSTSGGLYRNPIWYLDIFCINDLANHE.

It belongs to the intron maturase 2 family. MatK subfamily.

It localises to the plastid. The protein resides in the chloroplast. In terms of biological role, usually encoded in the trnK tRNA gene intron. Probably assists in splicing its own and other chloroplast group II introns. The polypeptide is Maturase K (Primula veris (Cowslip)).